The chain runs to 59 residues: uncharacterized protein (59 aa).

The chain crosses the membrane as a helical span at residues 6 to 26 (WWLVVFAVFVFLFDTLLMQWI).

Its subcellular location is the membrane. This is an uncharacterized protein from Escherichia coli O157:H7.